Consider the following 273-residue polypeptide: Ribosomal RNA small subunit methyltransferase A (273 aa).

Asn19, Leu21, Gly46, Glu71, Asp94, and Asn117 together coordinate S-adenosyl-L-methionine.

It belongs to the class I-like SAM-binding methyltransferase superfamily. rRNA adenine N(6)-methyltransferase family. RsmA subfamily.

Its subcellular location is the cytoplasm. It catalyses the reaction adenosine(1518)/adenosine(1519) in 16S rRNA + 4 S-adenosyl-L-methionine = N(6)-dimethyladenosine(1518)/N(6)-dimethyladenosine(1519) in 16S rRNA + 4 S-adenosyl-L-homocysteine + 4 H(+). Specifically dimethylates two adjacent adenosines (A1518 and A1519) in the loop of a conserved hairpin near the 3'-end of 16S rRNA in the 30S particle. May play a critical role in biogenesis of 30S subunits. The protein is Ribosomal RNA small subunit methyltransferase A of Burkholderia ambifaria (strain MC40-6).